The sequence spans 713 residues: Elongation factor G (713 aa).

In terms of domain architecture, tr-type G spans 8–290; that stretch reads ERYRNFGIMA…GVIQLLPSPV (283 aa). GTP is bound by residues 17–24, 88–92, and 142–145; these read AHIDAGKT, DTPGH, and NKMD.

This sequence belongs to the TRAFAC class translation factor GTPase superfamily. Classic translation factor GTPase family. EF-G/EF-2 subfamily.

The protein localises to the cytoplasm. Catalyzes the GTP-dependent ribosomal translocation step during translation elongation. During this step, the ribosome changes from the pre-translocational (PRE) to the post-translocational (POST) state as the newly formed A-site-bound peptidyl-tRNA and P-site-bound deacylated tRNA move to the P and E sites, respectively. Catalyzes the coordinated movement of the two tRNA molecules, the mRNA and conformational changes in the ribosome. This chain is Elongation factor G, found in Stenotrophomonas maltophilia (strain K279a).